Consider the following 293-residue polypeptide: Energy-coupling factor transporter ATP-binding protein EcfA2 (293 aa).

The ABC transporter domain maps to 3–246 (ITFQKVEHRY…ADELEKIGVD (244 aa)). 40 to 47 (GHTGSGKS) contributes to the ATP binding site.

It belongs to the ABC transporter superfamily. Energy-coupling factor EcfA family. In terms of assembly, forms a stable energy-coupling factor (ECF) transporter complex composed of 2 membrane-embedded substrate-binding proteins (S component), 2 ATP-binding proteins (A component) and 2 transmembrane proteins (T component).

It localises to the cell membrane. Its function is as follows. ATP-binding (A) component of a common energy-coupling factor (ECF) ABC-transporter complex. Unlike classic ABC transporters this ECF transporter provides the energy necessary to transport a number of different substrates. This chain is Energy-coupling factor transporter ATP-binding protein EcfA2, found in Bacillus anthracis.